The sequence spans 250 residues: Golgi SNAP receptor complex member 1 (250 aa).

Position 2 is an N-acetylalanine (Ala2). Topologically, residues Ala2–Asp229 are cytoplasmic. Positions Trp9–Leu27 form a coiled coil. The disordered stretch occupies residues Tyr37–Asn59. The segment covering Gly41–Ser51 has biased composition (basic and acidic residues). Positions Ile72–His93 form a coiled coil. At Ser141 the chain carries Phosphoserine. Residues Ser230 to His250 form a helical; Anchor for type IV membrane protein membrane-spanning segment.

This sequence belongs to the GOSR1 family. As to quaternary structure, component of several multiprotein Golgi SNARE complexes. Identified in a SNARE complex with BET1, STX5 and YKT6, in a SNARE complex with BET1L, STX5 and YKT6, in a SNARE complex with STX5, GOSR2, SEC22B and BET1, and in complex with STX5 and COG3. Interacts with GABARAPL2.

The protein localises to the golgi apparatus membrane. In terms of biological role, involved in transport from the ER to the Golgi apparatus as well as in intra-Golgi transport. It belongs to a super-family of proteins called t-SNAREs or soluble NSF (N-ethylmaleimide-sensitive factor) attachment protein receptor. May play a protective role against hydrogen peroxide induced cytotoxicity under glutathione depleted conditions in neuronal cells by regulating the intracellular ROS levels via inhibition of p38 MAPK (MAPK11, MAPK12, MAPK13 and MAPK14). Participates in docking and fusion stage of ER to cis-Golgi transport. Plays an important physiological role in VLDL-transport vesicle-Golgi fusion and thus in VLDL delivery to the hepatic cis-Golgi. This is Golgi SNAP receptor complex member 1 (Gosr1) from Mus musculus (Mouse).